The chain runs to 162 residues: Regulatory protein RecX (162 aa).

This sequence belongs to the RecX family.

The protein localises to the cytoplasm. Modulates RecA activity. In Xanthomonas axonopodis pv. citri (strain 306), this protein is Regulatory protein RecX.